We begin with the raw amino-acid sequence, 466 residues long: Phytase A (466 aa).

The first 19 residues, 1-19 (MGFLAIVLSVALLFRSTSG), serve as a signal peptide directing secretion. Cysteine 31 and cysteine 40 are joined by a disulfide. Positions 51, 81, 82, 85, and 88 each coordinate 1D-myo-inositol hexakisphosphate. Cystine bridges form between cysteine 71–cysteine 414, cysteine 215–cysteine 465, cysteine 264–cysteine 282, and cysteine 436–cysteine 444. Histidine 82 functions as the Nucleophile in the catalytic mechanism. N-linked (GlcNAc...) asparagine glycosylation occurs at asparagine 120. Arginine 165 provides a ligand contact to 1D-myo-inositol hexakisphosphate. Residues asparagine 207 and asparagine 230 are each glycosylated (N-linked (GlcNAc...) asparagine). 1D-myo-inositol hexakisphosphate is bound at residue lysine 301. N-linked (GlcNAc...) asparagine glycosylation is found at asparagine 339 and asparagine 352. The 1D-myo-inositol hexakisphosphate site is built by histidine 361 and aspartate 362. Asparagine 376 is a glycosylation site (N-linked (GlcNAc...) asparagine).

This sequence belongs to the histidine acid phosphatase family. Monomer.

The protein localises to the secreted. It carries out the reaction 1D-myo-inositol hexakisphosphate + H2O = 1D-myo-inositol 1,2,4,5,6-pentakisphosphate + phosphate. The enzyme catalyses 1D-myo-inositol 1,2,4,5,6-pentakisphosphate + H2O = 1D-myo-inositol 1,2,5,6-tetrakisphosphate + phosphate. The catalysed reaction is 1D-myo-inositol 1,2,5,6-tetrakisphosphate + H2O = 1D-myo-inositol 1,2,6-trisphosphate + phosphate. It catalyses the reaction 1D-myo-inositol 1,2,6-trisphosphate + H2O = 1D-myo-inositol 1,2-bisphosphate + phosphate. It carries out the reaction 1D-myo-inositol 1,2-bisphosphate + H2O = 1D-myo-inositol 2-phosphate + phosphate. Catalyzes the phosphate monoester hydrolysis of phytic acid (myo-inositol hexakisphosphate), which results in the stepwise formation of myo-inositol pentakis-, tetrakis-, tris-, bis-, and monophosphates, as well as the liberation of inorganic phosphate. Myo-inositol 2-monophosphate is the end product. Has a broad substrate specificity and is also able to dephosphorylate other classic acid phosphatase substrates such as p-nitrophenyl phosphate, phenyl phosphate, fructose 1,6-bisphosphate, glucose 6-phosphate, 3-phosphoglycerate, as well as ADP and ATP. The sequence is that of Phytase A from Aspergillus terreus.